The primary structure comprises 330 residues: 4-epi-cubebol synthase ((2E,6E)-farnesyl diphosphate cyclizing) (330 aa).

Residues Asp91 and Glu96 each contribute to the Mg(2+) site. The DDXXXE motif signature appears at 91-96; it reads DDAFCE. Substrate is bound at residue Arg184. The Mg(2+) site is built by Asn230 and Ser234. A substrate-binding site is contributed by Lys237. Glu238 is a binding site for Mg(2+). A substrate-binding site is contributed by 316 to 317; sequence RY.

The protein belongs to the terpene synthase family. Mg(2+) serves as cofactor.

It catalyses the reaction (2E,6E)-farnesyl diphosphate + H2O = 4-epi-cubebol + diphosphate. It functions in the pathway secondary metabolite biosynthesis; terpenoid biosynthesis. Functionally, catalyzes the conversion of (2E,6E)-farnesyl diphosphate (FPP) to yield the bicyclic sesquiterpenol 4-epi-cubebol via a 1,10-cyclization, which requires the abstraction of the pyrophosphate from FPP to yield a (E,E)-germacradienyl cation. The only accepted substrate is (2E,6E)-farnesyl diphosphate (FPP). This is 4-epi-cubebol synthase ((2E,6E)-farnesyl diphosphate cyclizing) from Streptosporangium roseum (strain ATCC 12428 / DSM 43021 / JCM 3005 / KCTC 9067 / NCIMB 10171 / NRRL 2505 / NI 9100).